We begin with the raw amino-acid sequence, 79 residues long: Cell division protein ZapB (79 aa).

The stretch at 6 to 78 forms a coiled coil; it reads FEKLEVKVQQ…LRALLGKMEE (73 aa).

The protein belongs to the ZapB family. Homodimer. The ends of the coiled-coil dimer bind to each other, forming polymers. Interacts with FtsZ.

The protein resides in the cytoplasm. Functionally, non-essential, abundant cell division factor that is required for proper Z-ring formation. It is recruited early to the divisome by direct interaction with FtsZ, stimulating Z-ring assembly and thereby promoting cell division earlier in the cell cycle. Its recruitment to the Z-ring requires functional FtsA or ZipA. The chain is Cell division protein ZapB from Yersinia enterocolitica serotype O:8 / biotype 1B (strain NCTC 13174 / 8081).